The following is a 275-amino-acid chain: Large ribosomal subunit protein uL2 (275 aa).

2 disordered regions span residues 1-55 (MGIR…RHRG) and 218-275 (PHVR…RRRR). The span at 259 to 275 (TRNKKKASSRLIVRRRR) shows a compositional bias: basic residues.

The protein belongs to the universal ribosomal protein uL2 family. As to quaternary structure, part of the 50S ribosomal subunit. Forms a bridge to the 30S subunit in the 70S ribosome.

In terms of biological role, one of the primary rRNA binding proteins. Required for association of the 30S and 50S subunits to form the 70S ribosome, for tRNA binding and peptide bond formation. It has been suggested to have peptidyltransferase activity; this is somewhat controversial. Makes several contacts with the 16S rRNA in the 70S ribosome. This chain is Large ribosomal subunit protein uL2, found in Crocosphaera subtropica (strain ATCC 51142 / BH68) (Cyanothece sp. (strain ATCC 51142)).